A 430-amino-acid polypeptide reads, in one-letter code: Adenylosuccinate synthetase (430 aa).

GTP is bound by residues 12-18 (GDEGKGK) and 40-42 (GHT). Catalysis depends on Asp-13, which acts as the Proton acceptor. Positions 13 and 40 each coordinate Mg(2+). Residues 13–16 (DEGK), 38–41 (NAGH), Thr-128, Arg-142, Gln-223, Thr-238, and Arg-302 contribute to the IMP site. His-41 functions as the Proton donor in the catalytic mechanism. 298-304 (TTTGRPR) is a binding site for substrate. GTP contacts are provided by residues Arg-304, 330-332 (SID), and 412-414 (SVG).

This sequence belongs to the adenylosuccinate synthetase family. As to quaternary structure, homodimer. Mg(2+) serves as cofactor.

The protein resides in the cytoplasm. The catalysed reaction is IMP + L-aspartate + GTP = N(6)-(1,2-dicarboxyethyl)-AMP + GDP + phosphate + 2 H(+). The protein operates within purine metabolism; AMP biosynthesis via de novo pathway; AMP from IMP: step 1/2. Plays an important role in the de novo pathway of purine nucleotide biosynthesis. Catalyzes the first committed step in the biosynthesis of AMP from IMP. This chain is Adenylosuccinate synthetase, found in Streptococcus pyogenes serotype M6 (strain ATCC BAA-946 / MGAS10394).